The following is a 736-amino-acid chain: Gingipain R2 (736 aa).

A signal peptide spans 1–24; that stretch reads MKKNFSRIVSIVAFSSLLGGMAFA. The propeptide occupies 25-229; that stretch reads QPAERGRNPQ…SVFMNYEATR (205 aa). Ca(2+) is bound by residues Asp-307, Val-329, Asp-332, Tyr-334, Glu-336, Glu-390, and His-395. His-440 serves as the catalytic Proton donor. Cys-473 serves as the catalytic Nucleophile. 8 residues coordinate Ca(2+): Phe-478, Glu-487, Asp-521, Glu-522, Glu-525, His-531, Asp-613, and Glu-639.

The protein belongs to the peptidase C25 family.

The protein localises to the secreted. It carries out the reaction Hydrolysis of proteins and small molecule substrates, with a preference for Arg in P1.. Inhibited by human histatin-3 1/24 (histatin-5). Functionally, thiol protease. Acts synergistically with RgpA to catalyze the maturation of fimbrial subunits, such as FimA. Its proteolytic activity is a major factor in both periodontal tissue destruction and in evasion of host defense mechanisms. The protein is Gingipain R2 (rgpB) of Porphyromonas gingivalis (strain ATCC BAA-308 / W83).